We begin with the raw amino-acid sequence, 161 residues long: MEYNTSELCDMYIDVVDVVEPMFSNYGGCSSFGGAISTVKCFEDNGLIADALQEDGEGKVLLVDGGGSLRRALIDASIAQIAVNNNWEGIIVYGSVRDVDALEELDLGIQALASIPVGAEGNGVGEIELPVNFGGVTFLPGDHIYADNTGVILSPEPLDID.

It belongs to the RraA family. As to quaternary structure, homotrimer. Binds to both RNA-binding sites in the C-terminal region of Rne and to RhlB.

Its subcellular location is the cytoplasm. Its function is as follows. Globally modulates RNA abundance by binding to RNase E (Rne) and regulating its endonucleolytic activity. Can modulate Rne action in a substrate-dependent manner by altering the composition of the degradosome. Modulates RNA-binding and helicase activities of the degradosome. In Shewanella denitrificans (strain OS217 / ATCC BAA-1090 / DSM 15013), this protein is Regulator of ribonuclease activity A.